Reading from the N-terminus, the 134-residue chain is Transcription antitermination protein NusB (134 aa).

The protein belongs to the NusB family.

Its function is as follows. Involved in transcription antitermination. Required for transcription of ribosomal RNA (rRNA) genes. Binds specifically to the boxA antiterminator sequence of the ribosomal RNA (rrn) operons. This chain is Transcription antitermination protein NusB, found in Shewanella sp. (strain W3-18-1).